We begin with the raw amino-acid sequence, 127 residues long: uncharacterized protein (127 aa).

The helical transmembrane segment at 84–103 threads the bilayer; sequence IALLSLFISLSIRITCFPFF.

Its subcellular location is the membrane. This is an uncharacterized protein from Saccharomyces cerevisiae (strain ATCC 204508 / S288c) (Baker's yeast).